The following is a 143-amino-acid chain: Transcriptional regulator MraZ (143 aa).

SpoVT-AbrB domains follow at residues 5 to 47 and 76 to 119; these read EYQH…PLTE and AMEG…AKER.

It belongs to the MraZ family. In terms of assembly, forms oligomers.

Its subcellular location is the cytoplasm. It localises to the nucleoid. This is Transcriptional regulator MraZ from Lactobacillus delbrueckii subsp. bulgaricus (strain ATCC 11842 / DSM 20081 / BCRC 10696 / JCM 1002 / NBRC 13953 / NCIMB 11778 / NCTC 12712 / WDCM 00102 / Lb 14).